Consider the following 612-residue polypeptide: Zinc metalloproteinase nas-36 (612 aa).

The signal sequence occupies residues 1–16 (MLLLVLLFVFISATNA). The N-linked (GlcNAc...) asparagine glycan is linked to Asn15. A propeptide spanning residues 17-122 (SDVGRRELEK…KSKPNVRGRR (106 aa)) is cleaved from the precursor. The 198-residue stretch at 123–320 (SFDASPESKW…IETINKAYCS (198 aa)) folds into the Peptidase M12A domain. The N-linked (GlcNAc...) asparagine glycan is linked to Asn163. 8 disulfide bridges follow: Cys166–Cys319, Cys190–Cys209, Cys329–Cys343, Cys345–Cys354, Cys365–Cys394, Cys515–Cys546, Cys519–Cys551, and Cys531–Cys536. His217 contributes to the Zn(2+) binding site. Glu218 is an active-site residue. Positions 221 and 227 each coordinate Zn(2+). Residues 320–355 (SDRCSGSNDCKNGGYPHPKQCDTCLCPNGLSGPKCE) enclose the EGF-like domain. The region spanning 365-478 (CGGKIVVKEE…VGFKLQARAT (114 aa)) is the CUB domain. Positions 503–552 (TDQWAEWGSWSQCSRSCGGCGIMSRVRVCRTKQCKGRRQEFSTCNLKACP) constitute a TSP type-1 domain.

Requires Zn(2+) as cofactor.

The protein resides in the secreted. Its activity is regulated as follows. Inhibited by 1,10-phenanthroline. In terms of biological role, metalloprotease. Involved in molting, a process during larval stages in which a new cuticle is formed and the old cuticle is shed. This is Zinc metalloproteinase nas-36 from Haemonchus contortus (Barber pole worm).